The sequence spans 151 residues: Small ribosomal subunit protein uS15 (151 aa).

The protein belongs to the universal ribosomal protein uS15 family. In terms of assembly, component of the small ribosomal subunit. Mature ribosomes consist of a small (40S) and a large (60S) subunit. The 40S subunit contains about 32 different proteins and 1 molecule of RNA (18S). The 60S subunit contains 45 different proteins and 3 molecules of RNA (25S, 5.8S and 5S).

Its subcellular location is the cytoplasm. Component of the ribosome, a large ribonucleoprotein complex responsible for the synthesis of proteins in the cell. The small ribosomal subunit (SSU) binds messenger RNAs (mRNAs) and translates the encoded message by selecting cognate aminoacyl-transfer RNA (tRNA) molecules. The large subunit (LSU) contains the ribosomal catalytic site termed the peptidyl transferase center (PTC), which catalyzes the formation of peptide bonds, thereby polymerizing the amino acids delivered by tRNAs into a polypeptide chain. The nascent polypeptides leave the ribosome through a tunnel in the LSU and interact with protein factors that function in enzymatic processing, targeting, and the membrane insertion of nascent chains at the exit of the ribosomal tunnel. The protein is Small ribosomal subunit protein uS15 (RPS13) of Candida albicans (strain SC5314 / ATCC MYA-2876) (Yeast).